Here is a 196-residue protein sequence, read N- to C-terminus: Gastrula zinc finger protein xLCGF3.1 (196 aa).

C2H2-type zinc fingers lie at residues 6-28, 34-56, 62-84, 90-112, 118-140, 146-168, and 174-196; these read FMCT…HMTH, FTCT…QTIH, FTCI…YMTH, FTCT…QTMH, LTCT…QRVH, FTCT…QTVH, and FTCT…QIVH.

This sequence belongs to the krueppel C2H2-type zinc-finger protein family.

The protein resides in the nucleus. Its function is as follows. May be involved in transcriptional regulation. This chain is Gastrula zinc finger protein xLCGF3.1, found in Xenopus laevis (African clawed frog).